Reading from the N-terminus, the 264-residue chain is 3-methyl-2-oxobutanoate hydroxymethyltransferase (264 aa).

Residues D45 and D84 each contribute to the Mg(2+) site. 3-methyl-2-oxobutanoate-binding positions include 45–46, D84, and K112; that span reads DS. E114 contacts Mg(2+). E181 (proton acceptor) is an active-site residue.

The protein belongs to the PanB family. As to quaternary structure, homodecamer; pentamer of dimers. Requires Mg(2+) as cofactor.

It localises to the cytoplasm. It catalyses the reaction 3-methyl-2-oxobutanoate + (6R)-5,10-methylene-5,6,7,8-tetrahydrofolate + H2O = 2-dehydropantoate + (6S)-5,6,7,8-tetrahydrofolate. The protein operates within cofactor biosynthesis; (R)-pantothenate biosynthesis; (R)-pantoate from 3-methyl-2-oxobutanoate: step 1/2. Functionally, catalyzes the reversible reaction in which hydroxymethyl group from 5,10-methylenetetrahydrofolate is transferred onto alpha-ketoisovalerate to form ketopantoate. This Escherichia coli (strain 55989 / EAEC) protein is 3-methyl-2-oxobutanoate hydroxymethyltransferase.